Consider the following 417-residue polypeptide: Gamma-glutamyl phosphate reductase (417 aa).

The protein belongs to the gamma-glutamyl phosphate reductase family.

It localises to the cytoplasm. The enzyme catalyses L-glutamate 5-semialdehyde + phosphate + NADP(+) = L-glutamyl 5-phosphate + NADPH + H(+). It functions in the pathway amino-acid biosynthesis; L-proline biosynthesis; L-glutamate 5-semialdehyde from L-glutamate: step 2/2. Functionally, catalyzes the NADPH-dependent reduction of L-glutamate 5-phosphate into L-glutamate 5-semialdehyde and phosphate. The product spontaneously undergoes cyclization to form 1-pyrroline-5-carboxylate. The chain is Gamma-glutamyl phosphate reductase from Escherichia coli O157:H7.